Consider the following 460-residue polypeptide: Bifunctional protein GlmU (460 aa).

The segment at 1–232 (MALNVVILAA…AIEVEGANNR (232 aa)) is pyrophosphorylase. UDP-N-acetyl-alpha-D-glucosamine-binding positions include 8–11 (LAAG), Lys22, Gln73, 78–79 (GT), 100–102 (YGD), Gly137, Glu157, Asn172, and Asn230. Asp102 contributes to the Mg(2+) binding site. Mg(2+) is bound at residue Asn230. The segment at 233–253 (VQLAQLERAYQAREAEKLMLA) is linker. An N-acetyltransferase region spans residues 254–460 (GANLRDPSRI…GWQRPVKIKK (207 aa)). 2 residues coordinate UDP-N-acetyl-alpha-D-glucosamine: Arg336 and Lys354. His366 (proton acceptor) is an active-site residue. 2 residues coordinate UDP-N-acetyl-alpha-D-glucosamine: Tyr369 and Asn380. Acetyl-CoA-binding positions include Ala383, 389–390 (NY), Ser408, Ala426, and Arg443.

This sequence in the N-terminal section; belongs to the N-acetylglucosamine-1-phosphate uridyltransferase family. In the C-terminal section; belongs to the transferase hexapeptide repeat family. In terms of assembly, homotrimer. It depends on Mg(2+) as a cofactor.

The protein localises to the cytoplasm. It carries out the reaction alpha-D-glucosamine 1-phosphate + acetyl-CoA = N-acetyl-alpha-D-glucosamine 1-phosphate + CoA + H(+). It catalyses the reaction N-acetyl-alpha-D-glucosamine 1-phosphate + UTP + H(+) = UDP-N-acetyl-alpha-D-glucosamine + diphosphate. It functions in the pathway nucleotide-sugar biosynthesis; UDP-N-acetyl-alpha-D-glucosamine biosynthesis; N-acetyl-alpha-D-glucosamine 1-phosphate from alpha-D-glucosamine 6-phosphate (route II): step 2/2. Its pathway is nucleotide-sugar biosynthesis; UDP-N-acetyl-alpha-D-glucosamine biosynthesis; UDP-N-acetyl-alpha-D-glucosamine from N-acetyl-alpha-D-glucosamine 1-phosphate: step 1/1. The protein operates within bacterial outer membrane biogenesis; LPS lipid A biosynthesis. In terms of biological role, catalyzes the last two sequential reactions in the de novo biosynthetic pathway for UDP-N-acetylglucosamine (UDP-GlcNAc). The C-terminal domain catalyzes the transfer of acetyl group from acetyl coenzyme A to glucosamine-1-phosphate (GlcN-1-P) to produce N-acetylglucosamine-1-phosphate (GlcNAc-1-P), which is converted into UDP-GlcNAc by the transfer of uridine 5-monophosphate (from uridine 5-triphosphate), a reaction catalyzed by the N-terminal domain. This chain is Bifunctional protein GlmU, found in Shewanella baltica (strain OS223).